The primary structure comprises 152 residues: SsrA-binding protein (152 aa).

This sequence belongs to the SmpB family.

The protein localises to the cytoplasm. Its function is as follows. Required for rescue of stalled ribosomes mediated by trans-translation. Binds to transfer-messenger RNA (tmRNA), required for stable association of tmRNA with ribosomes. tmRNA and SmpB together mimic tRNA shape, replacing the anticodon stem-loop with SmpB. tmRNA is encoded by the ssrA gene; the 2 termini fold to resemble tRNA(Ala) and it encodes a 'tag peptide', a short internal open reading frame. During trans-translation Ala-aminoacylated tmRNA acts like a tRNA, entering the A-site of stalled ribosomes, displacing the stalled mRNA. The ribosome then switches to translate the ORF on the tmRNA; the nascent peptide is terminated with the 'tag peptide' encoded by the tmRNA and targeted for degradation. The ribosome is freed to recommence translation, which seems to be the essential function of trans-translation. In Rickettsia conorii (strain ATCC VR-613 / Malish 7), this protein is SsrA-binding protein.